A 250-amino-acid polypeptide reads, in one-letter code: DNA repair protein RecO (250 aa).

Belongs to the RecO family.

Its function is as follows. Involved in DNA repair and RecF pathway recombination. This chain is DNA repair protein RecO, found in Staphylococcus haemolyticus (strain JCSC1435).